The primary structure comprises 519 residues: Carboxyl-terminal-processing peptidase 3, chloroplastic (519 aa).

In terms of domain architecture, PDZ spans 186 to 274 (YQSFRIGSDG…IKLKNVNGSG (89 aa)). Active-site charge relay system residues include Ser-407 and Lys-432.

It belongs to the peptidase S41A family.

The protein resides in the plastid. Its subcellular location is the chloroplast thylakoid lumen. The enzyme catalyses The enzyme shows specific recognition of a C-terminal tripeptide, Xaa-Yaa-Zaa, in which Xaa is preferably Ala or Leu, Yaa is preferably Ala or Tyr, and Zaa is preferably Ala, but then cleaves at a variable distance from the C-terminus. A typical cleavage is -Ala-Ala-|-Arg-Ala-Ala-Lys-Glu-Asn-Tyr-Ala-Leu-Ala-Ala.. In terms of biological role, protease involved in the C-terminal processing of the chloroplastic D1 protein of photosystem II. This proteolytic processing is necessary to allow the light-driven assembly of the tetranuclear manganese cluster, which is responsible for photosynthetic water oxidation. The sequence is that of Carboxyl-terminal-processing peptidase 3, chloroplastic (CTPA3) from Arabidopsis thaliana (Mouse-ear cress).